The sequence spans 130 residues: Small ribosomal subunit protein uS8 (130 aa).

It belongs to the universal ribosomal protein uS8 family. As to quaternary structure, part of the 30S ribosomal subunit. Contacts proteins S5 and S12.

Its function is as follows. One of the primary rRNA binding proteins, it binds directly to 16S rRNA central domain where it helps coordinate assembly of the platform of the 30S subunit. The polypeptide is Small ribosomal subunit protein uS8 (Onion yellows phytoplasma (strain OY-M)).